A 277-amino-acid chain; its full sequence is 3-methyl-2-oxobutanoate hydroxymethyltransferase (277 aa).

2 residues coordinate Mg(2+): D43 and D82. 3-methyl-2-oxobutanoate contacts are provided by residues D43–S44, D82, and K112. Residue E114 coordinates Mg(2+). The Proton acceptor role is filled by E181.

It belongs to the PanB family. Homodecamer; pentamer of dimers. Mg(2+) is required as a cofactor.

It localises to the cytoplasm. It catalyses the reaction 3-methyl-2-oxobutanoate + (6R)-5,10-methylene-5,6,7,8-tetrahydrofolate + H2O = 2-dehydropantoate + (6S)-5,6,7,8-tetrahydrofolate. It functions in the pathway cofactor biosynthesis; (R)-pantothenate biosynthesis; (R)-pantoate from 3-methyl-2-oxobutanoate: step 1/2. Functionally, catalyzes the reversible reaction in which hydroxymethyl group from 5,10-methylenetetrahydrofolate is transferred onto alpha-ketoisovalerate to form ketopantoate. The polypeptide is 3-methyl-2-oxobutanoate hydroxymethyltransferase (Bacillus licheniformis (strain ATCC 14580 / DSM 13 / JCM 2505 / CCUG 7422 / NBRC 12200 / NCIMB 9375 / NCTC 10341 / NRRL NRS-1264 / Gibson 46)).